The primary structure comprises 359 residues: MKAIDINVKEKSYKISIKKGILSSIGERLKTTYQSRNIVVITDTNVEKFYMETLKNSLLESGFTMKIISIEPGEKSKNLATLERVYEKLCEFQIRRKDIIISLGGGVVGDLSGFAASTYLRGINYIQVPTSLLAQVDSSIGGKVAVDLPWGKNLVGSFYHPDAVFIDPDVLLSLNDKFFSDGMGEVIKYGFIKDKSILNLLDSCKDKDEVLQYIEDIIYKCCSIKKHLVEKDERDLGERMMLNFGHTLAHGIEKYYNYGKYSHGEAVAIGMTYMTNITERMDITKKGTHDYMKGILTKYGLPVNMPDMDKQALVNSIALDKKSSGDRINIIVIEEAGICKIMKIKLREVYGFLFPEDII.

NAD(+) contacts are provided by residues 106–110 (GVVGD), 130–131 (TS), Lys-143, and Lys-152. Zn(2+)-binding residues include Glu-185, His-246, and His-263.

This sequence belongs to the sugar phosphate cyclases superfamily. Dehydroquinate synthase family. It depends on Co(2+) as a cofactor. Zn(2+) is required as a cofactor. The cofactor is NAD(+).

The protein resides in the cytoplasm. The catalysed reaction is 7-phospho-2-dehydro-3-deoxy-D-arabino-heptonate = 3-dehydroquinate + phosphate. Its pathway is metabolic intermediate biosynthesis; chorismate biosynthesis; chorismate from D-erythrose 4-phosphate and phosphoenolpyruvate: step 2/7. Functionally, catalyzes the conversion of 3-deoxy-D-arabino-heptulosonate 7-phosphate (DAHP) to dehydroquinate (DHQ). The sequence is that of 3-dehydroquinate synthase from Clostridium kluyveri (strain ATCC 8527 / DSM 555 / NBRC 12016 / NCIMB 10680 / K1).